We begin with the raw amino-acid sequence, 87 residues long: Large ribosomal subunit protein bL27 (87 aa).

This sequence belongs to the bacterial ribosomal protein bL27 family.

The polypeptide is Large ribosomal subunit protein bL27 (Paenarthrobacter aurescens (strain TC1)).